The primary structure comprises 538 residues: Furcatin hydrolase (538 aa).

The transit peptide at 1–66 directs the protein to the chloroplast; that stretch reads MATITTLASS…NFNKDNWLAS (66 aa). Residues 18-37 are disordered; sequence SFPGGSSRKPKKDNLSIKPP. A beta-D-glucoside-binding positions include Gln-88, His-192, and 237-238; that span reads NE. Glu-238 (proton donor) is an active-site residue. Cys-257 and Cys-260 are disulfide-bonded. Residues Tyr-376, Glu-447, Trp-494, 501–502, and Phe-510 each bind a beta-D-glucoside; that span reads EW. Glu-447 serves as the catalytic Nucleophile.

It belongs to the glycosyl hydrolase 1 family. In terms of tissue distribution, expressed in young and mature leaves, but not in fruit and stem.

The protein localises to the plastid. It localises to the chloroplast. The catalysed reaction is 7-[beta-D-apiofuranosyl-(1-&gt;6)-beta-D-glucopyranosyloxy]isoflavonoid + H2O = a 7-hydroxyisoflavonoid + beta-D-apiofuranosyl-(1-&gt;6)-D-glucose.. Its function is as follows. Disaccharide-specific acuminosidase, hydrolyzes the beta-glycosidic bond between p-allylphenol and acuminose with retention of anomeric configuration. Has highest activity towards furcatin, and lower activity towards beta-primeverosides and beta-vicianoside. Has very low activity towards beta-gentobiosides. This chain is Furcatin hydrolase, found in Viburnum furcatum (Scarlet leaved viburnum).